The primary structure comprises 516 residues: Probable cytosol aminopeptidase (516 aa).

The Mn(2+) site is built by K288 and D293. K300 is a catalytic residue. D311, D370, and E372 together coordinate Mn(2+). Residue R374 is part of the active site.

It belongs to the peptidase M17 family. It depends on Mn(2+) as a cofactor.

The protein localises to the cytoplasm. It carries out the reaction Release of an N-terminal amino acid, Xaa-|-Yaa-, in which Xaa is preferably Leu, but may be other amino acids including Pro although not Arg or Lys, and Yaa may be Pro. Amino acid amides and methyl esters are also readily hydrolyzed, but rates on arylamides are exceedingly low.. The enzyme catalyses Release of an N-terminal amino acid, preferentially leucine, but not glutamic or aspartic acids.. Its function is as follows. Presumably involved in the processing and regular turnover of intracellular proteins. Catalyzes the removal of unsubstituted N-terminal amino acids from various peptides. The sequence is that of Probable cytosol aminopeptidase from Cupriavidus taiwanensis (strain DSM 17343 / BCRC 17206 / CCUG 44338 / CIP 107171 / LMG 19424 / R1) (Ralstonia taiwanensis (strain LMG 19424)).